The primary structure comprises 507 residues: Dolichyl pyrophosphate Man9GlcNAc2 alpha-1,3-glucosyltransferase (507 aa).

At 1–3 the chain is on the cytoplasmic side; it reads MEK. The helical transmembrane segment at 4–24 threads the bilayer; the sequence is WYLMTVVVLIGLTVRWTVSLN. Over 25-114 the chain is Lumenal; sequence SYSGAGKPPM…SQAHKLFMRT (90 aa). An N-linked (GlcNAc...) asparagine glycan is attached at Asn-59. A helical transmembrane segment spans residues 115–135; sequence TVLIADLLIYIPAVVLYCCCL. The Cytoplasmic segment spans residues 136-143; sequence KEISTKKK. A helical membrane pass occupies residues 144-164; sequence IANALCILLYPGLILIDYGHF. Topologically, residues 165 to 172 are lumenal; it reads QYNSVSLG. The helical transmembrane segment at 173–193 threads the bilayer; it reads FALWGVLGISCDCDLLGSLAF. Topologically, residues 194–226 are cytoplasmic; the sequence is CLAINYKQMELYHALPFFCFLLGKCFKKGLKGK. Residues 227–247 traverse the membrane as a helical segment; sequence GFVLLVKLACIVVASFVLCWL. Residues 248–297 lie on the Lumenal side of the membrane; that stretch reads PFFTEREQTLQVLRRLFPVDRGLFEDKVANIWCSFNVFLKIKDILPRHIQ. Residues 298–318 traverse the membrane as a helical segment; the sequence is LIMSFCFTFLSLLPACIKLIL. The Cytoplasmic portion of the chain corresponds to 319–323; the sequence is QPSSK. Residues 324–344 traverse the membrane as a helical segment; that stretch reads GFKFTLVSCALSFFLFSFQVH. The Lumenal segment spans residues 345-361; it reads EKSILLVSLPVCLVLSE. A helical membrane pass occupies residues 362–382; the sequence is IPFMSTWFLLVSTFSMLPLLL. Topologically, residues 383–387 are cytoplasmic; that stretch reads KDELL. The chain crosses the membrane as a helical span at residues 388-408; sequence MPSVVTTMAFFIACVTSFSIF. Over 409-437 the chain is Lumenal; that stretch reads EKTSEEELQLKSFSISVRKYLPCFTFLSR. Residues 438 to 458 traverse the membrane as a helical segment; the sequence is IIQYLFLISVITMVLLTLMTV. The Cytoplasmic segment spans residues 459–473; sequence TLGPPQKLPDLFSVL. The helical transmembrane segment at 474 to 494 threads the bilayer; sequence VCFVSCLNFLFFLVYFNIIIV. Residues 495–507 lie on the Lumenal side of the membrane; the sequence is WDSKSGRNQKKIS.

The protein belongs to the ALG6/ALG8 glucosyltransferase family.

The protein resides in the endoplasmic reticulum membrane. The catalysed reaction is an alpha-D-Man-(1-&gt;2)-alpha-D-Man-(1-&gt;2)-alpha-D-Man-(1-&gt;3)-[alpha-D-Man-(1-&gt;2)-alpha-D-Man-(1-&gt;3)-[alpha-D-Man-(1-&gt;2)-alpha-D-Man-(1-&gt;6)]-alpha-D-Man-(1-&gt;6)]-beta-D-Man-(1-&gt;4)-beta-D-GlcNAc-(1-&gt;4)-alpha-D-GlcNAc-diphospho-di-trans,poly-cis-dolichol + a di-trans,poly-cis-dolichyl beta-D-glucosyl phosphate = an alpha-D-Glc-(1-&gt;3)-alpha-D-Man-(1-&gt;2)-alpha-D-Man-(1-&gt;2)-alpha-D-Man-(1-&gt;3)-[alpha-D-Man-(1-&gt;2)-alpha-D-Man-(1-&gt;3)-[alpha-D-Man-(1-&gt;2)-alpha-D-Man-(1-&gt;6)]-alpha-D-Man-(1-&gt;6)]-beta-D-Man-(1-&gt;4)-beta-D-GlcNAc-(1-&gt;4)-alpha-D-GlcNAc-diphospho-di-trans,poly-cis-dolichol + a di-trans,poly-cis-dolichyl phosphate + H(+). It participates in protein modification; protein glycosylation. In terms of biological role, dolichyl pyrophosphate Man9GlcNAc2 alpha-1,3-glucosyltransferase that operates in the biosynthetic pathway of dolichol-linked oligosaccharides, the glycan precursors employed in protein asparagine (N)-glycosylation. The assembly of dolichol-linked oligosaccharides begins on the cytosolic side of the endoplasmic reticulum membrane and finishes in its lumen. The sequential addition of sugars to dolichol pyrophosphate produces dolichol-linked oligosaccharides containing fourteen sugars, including two GlcNAcs, nine mannoses and three glucoses. Once assembled, the oligosaccharide is transferred from the lipid to nascent proteins by oligosaccharyltransferases. In the lumen of the endoplasmic reticulum, adds the first glucose residue from dolichyl phosphate glucose (Dol-P-Glc) onto the lipid-linked oligosaccharide intermediate Man(9)GlcNAc(2)-PP-Dol to produce Glc(1)Man(9)GlcNAc(2)-PP-Dol. Glc(1)Man(9)GlcNAc(2)-PP-Dol is a substrate for ALG8, the following enzyme in the biosynthetic pathway. This Pongo abelii (Sumatran orangutan) protein is Dolichyl pyrophosphate Man9GlcNAc2 alpha-1,3-glucosyltransferase.